The sequence spans 163 residues: 2-C-methyl-D-erythritol 2,4-cyclodiphosphate synthase (163 aa).

A divalent metal cation-binding residues include Asp-15 and His-17. 4-CDP-2-C-methyl-D-erythritol 2-phosphate contacts are provided by residues 15 to 17 (DFH) and 41 to 42 (HS). His-49 is an a divalent metal cation binding site. Residues 63-65 (DIG) and 139-142 (TTNE) contribute to the 4-CDP-2-C-methyl-D-erythritol 2-phosphate site.

Belongs to the IspF family. As to quaternary structure, homotrimer. The cofactor is a divalent metal cation.

The catalysed reaction is 4-CDP-2-C-methyl-D-erythritol 2-phosphate = 2-C-methyl-D-erythritol 2,4-cyclic diphosphate + CMP. It functions in the pathway isoprenoid biosynthesis; isopentenyl diphosphate biosynthesis via DXP pathway; isopentenyl diphosphate from 1-deoxy-D-xylulose 5-phosphate: step 4/6. Involved in the biosynthesis of isopentenyl diphosphate (IPP) and dimethylallyl diphosphate (DMAPP), two major building blocks of isoprenoid compounds. Catalyzes the conversion of 4-diphosphocytidyl-2-C-methyl-D-erythritol 2-phosphate (CDP-ME2P) to 2-C-methyl-D-erythritol 2,4-cyclodiphosphate (ME-CPP) with a corresponding release of cytidine 5-monophosphate (CMP). This chain is 2-C-methyl-D-erythritol 2,4-cyclodiphosphate synthase, found in Gloeobacter violaceus (strain ATCC 29082 / PCC 7421).